We begin with the raw amino-acid sequence, 451 residues long: Methylenetetrahydrofolate--tRNA-(uracil-5-)-methyltransferase TrmFO (451 aa).

18-23 (GGGLAG) is a binding site for FAD.

The protein belongs to the MnmG family. TrmFO subfamily. Requires FAD as cofactor.

Its subcellular location is the cytoplasm. The enzyme catalyses uridine(54) in tRNA + (6R)-5,10-methylene-5,6,7,8-tetrahydrofolate + NADH + H(+) = 5-methyluridine(54) in tRNA + (6S)-5,6,7,8-tetrahydrofolate + NAD(+). The catalysed reaction is uridine(54) in tRNA + (6R)-5,10-methylene-5,6,7,8-tetrahydrofolate + NADPH + H(+) = 5-methyluridine(54) in tRNA + (6S)-5,6,7,8-tetrahydrofolate + NADP(+). Functionally, catalyzes the folate-dependent formation of 5-methyl-uridine at position 54 (M-5-U54) in all tRNAs. This is Methylenetetrahydrofolate--tRNA-(uracil-5-)-methyltransferase TrmFO from Synechococcus sp. (strain JA-3-3Ab) (Cyanobacteria bacterium Yellowstone A-Prime).